Reading from the N-terminus, the 432-residue chain is Trigger factor (432 aa).

The PPIase FKBP-type domain occupies 161 to 246 (GTRATINFVG…VVKVESRELP (86 aa)).

Belongs to the FKBP-type PPIase family. Tig subfamily.

The protein resides in the cytoplasm. It catalyses the reaction [protein]-peptidylproline (omega=180) = [protein]-peptidylproline (omega=0). Its function is as follows. Involved in protein export. Acts as a chaperone by maintaining the newly synthesized protein in an open conformation. Functions as a peptidyl-prolyl cis-trans isomerase. In Aliivibrio fischeri (strain ATCC 700601 / ES114) (Vibrio fischeri), this protein is Trigger factor.